The following is a 661-amino-acid chain: UvrABC system protein B (661 aa).

A Helicase ATP-binding domain is found at 28 to 414 (KGVKEGKRHQ…HTDEMIEQII (387 aa)). 41-48 (GATGTGKT) provides a ligand contact to ATP. The Beta-hairpin signature appears at 94 to 117 (YYDYYQPEAYVPSTDTFIEKDASI). Residues 432 to 598 (QIDDLLSEIQ…TINKKIHDVI (167 aa)) enclose the Helicase C-terminal domain. Positions 604-625 (NDETNEKQQTELPKKMTKKERQ) are disordered. The span at 607-617 (TNEKQQTELPK) shows a compositional bias: basic and acidic residues. A UVR domain is found at 625-660 (QKTIENIEKEMKKAAKDLDFEKATELRDMLFELKSE).

Belongs to the UvrB family. In terms of assembly, forms a heterotetramer with UvrA during the search for lesions. Interacts with UvrC in an incision complex.

The protein localises to the cytoplasm. The UvrABC repair system catalyzes the recognition and processing of DNA lesions. A damage recognition complex composed of 2 UvrA and 2 UvrB subunits scans DNA for abnormalities. Upon binding of the UvrA(2)B(2) complex to a putative damaged site, the DNA wraps around one UvrB monomer. DNA wrap is dependent on ATP binding by UvrB and probably causes local melting of the DNA helix, facilitating insertion of UvrB beta-hairpin between the DNA strands. Then UvrB probes one DNA strand for the presence of a lesion. If a lesion is found the UvrA subunits dissociate and the UvrB-DNA preincision complex is formed. This complex is subsequently bound by UvrC and the second UvrB is released. If no lesion is found, the DNA wraps around the other UvrB subunit that will check the other stand for damage. This chain is UvrABC system protein B, found in Staphylococcus haemolyticus (strain JCSC1435).